A 1308-amino-acid chain; its full sequence is Transposon TX1 uncharacterized 149 kDa protein (1308 aa).

Residues Glu494 to Leu765 form the Reverse transcriptase domain.

The chain is Transposon TX1 uncharacterized 149 kDa protein from Xenopus laevis (African clawed frog).